Here is a 214-residue protein sequence, read N- to C-terminus: Ribonuclease HII (214 aa).

The region spanning 26 to 214 (EIVCGVDEAG…PVRAALDLIR (189 aa)) is the RNase H type-2 domain. Residues aspartate 32, glutamate 33, and aspartate 124 each coordinate a divalent metal cation.

It belongs to the RNase HII family. It depends on Mn(2+) as a cofactor. Mg(2+) serves as cofactor.

The protein localises to the cytoplasm. The enzyme catalyses Endonucleolytic cleavage to 5'-phosphomonoester.. Functionally, endonuclease that specifically degrades the RNA of RNA-DNA hybrids. This chain is Ribonuclease HII, found in Burkholderia orbicola (strain MC0-3).